A 436-amino-acid chain; its full sequence is GTPase Der (436 aa).

2 consecutive EngA-type G domains span residues proline 4 to glutamate 167 and isoleucine 175 to asparagine 351. GTP-binding positions include glycine 10–serine 17, aspartate 57–isoleucine 61, asparagine 119–aspartate 122, glycine 181–serine 188, aspartate 229–methionine 233, and asparagine 294–aspartate 297. The 85-residue stretch at threonine 352 to lysine 436 folds into the KH-like domain.

This sequence belongs to the TRAFAC class TrmE-Era-EngA-EngB-Septin-like GTPase superfamily. EngA (Der) GTPase family. As to quaternary structure, associates with the 50S ribosomal subunit.

GTPase that plays an essential role in the late steps of ribosome biogenesis. The sequence is that of GTPase Der from Streptococcus gordonii (strain Challis / ATCC 35105 / BCRC 15272 / CH1 / DL1 / V288).